The chain runs to 161 residues: Lipoprotein signal peptidase (161 aa).

3 helical membrane-spanning segments follow: residues 9 to 29 (ISLLMTFIVLVFDQVSKWLIT), 63 to 83 (KMLFFYIITIIILIVLVIFYI), and 88 to 108 (FNLFMQVAISLLFAGALGNFI). Residues Asp118 and Asp136 contribute to the active site. Residues 131 to 151 (IFNIADSSLTIGVIFVIITLI) traverse the membrane as a helical segment.

This sequence belongs to the peptidase A8 family.

The protein localises to the cell membrane. It carries out the reaction Release of signal peptides from bacterial membrane prolipoproteins. Hydrolyzes -Xaa-Yaa-Zaa-|-(S,diacylglyceryl)Cys-, in which Xaa is hydrophobic (preferably Leu), and Yaa (Ala or Ser) and Zaa (Gly or Ala) have small, neutral side chains.. The protein operates within protein modification; lipoprotein biosynthesis (signal peptide cleavage). Functionally, this protein specifically catalyzes the removal of signal peptides from prolipoproteins. The polypeptide is Lipoprotein signal peptidase (Staphylococcus epidermidis (strain ATCC 35984 / DSM 28319 / BCRC 17069 / CCUG 31568 / BM 3577 / RP62A)).